The primary structure comprises 527 residues: uncharacterized protein (527 aa).

Positions methionine 1–threonine 93 constitute a PE domain. 3 stretches are compositionally biased toward gly residues: residues isoleucine 264–glycine 286, glycine 292–glycine 384, and asparagine 472–arginine 515. Disordered stretches follow at residues isoleucine 264–glycine 384 and asparagine 472–glutamine 527.

This sequence belongs to the mycobacterial PE family. PGRS subfamily.

This is an uncharacterized protein from Mycobacterium tuberculosis (strain CDC 1551 / Oshkosh).